We begin with the raw amino-acid sequence, 101 residues long: DNA-binding protein Fis (101 aa).

A DNA-binding region (H-T-H motif) is located at residues 77–96 (QTRAANMLGINRGTLRKKLK).

This sequence belongs to the transcriptional regulatory Fis family. As to quaternary structure, homodimer.

In terms of biological role, activates ribosomal RNA transcription. Plays a direct role in upstream activation of rRNA promoters. This is DNA-binding protein Fis from Shewanella loihica (strain ATCC BAA-1088 / PV-4).